Reading from the N-terminus, the 110-residue chain is Phosphoribosyl-AMP cyclohydrolase (110 aa).

Residue D80 coordinates Mg(2+). C81 serves as a coordination point for Zn(2+). D82 and D84 together coordinate Mg(2+). Residues C97 and C104 each coordinate Zn(2+).

Belongs to the PRA-CH family. As to quaternary structure, homodimer. Mg(2+) serves as cofactor. The cofactor is Zn(2+).

Its subcellular location is the cytoplasm. It carries out the reaction 1-(5-phospho-beta-D-ribosyl)-5'-AMP + H2O = 1-(5-phospho-beta-D-ribosyl)-5-[(5-phospho-beta-D-ribosylamino)methylideneamino]imidazole-4-carboxamide. It functions in the pathway amino-acid biosynthesis; L-histidine biosynthesis; L-histidine from 5-phospho-alpha-D-ribose 1-diphosphate: step 3/9. In terms of biological role, catalyzes the hydrolysis of the adenine ring of phosphoribosyl-AMP. In Clostridium botulinum (strain Kyoto / Type A2), this protein is Phosphoribosyl-AMP cyclohydrolase.